A 429-amino-acid chain; its full sequence is Transcriptional coactivator AacuS (429 aa).

Residues 80–144 (MASQTQLLAC…GFLQEPELGH (65 aa)) form the HTH iclR-type domain. Positions 110–129 (IKDVAELIGVPENHICRIVR) form a DNA-binding region, H-T-H motif.

It localises to the nucleus. Transcriptional coactivator; part of the gene cluster that mediates the biosynthesis of the tetrahydroxanthone dimer secalonic acid D. The sequence is that of Transcriptional coactivator AacuS from Aspergillus aculeatus (strain ATCC 16872 / CBS 172.66 / WB 5094).